Here is a 231-residue protein sequence, read N- to C-terminus: Ribonuclease HII (231 aa).

Residues 32–223 enclose the RNase H type-2 domain; it reads WPVAGMDEAG…FRLGGTEVVE (192 aa). The a divalent metal cation site is built by D38, E39, and D130.

The protein belongs to the RNase HII family. The cofactor is Mn(2+). Mg(2+) serves as cofactor.

The protein localises to the cytoplasm. The catalysed reaction is Endonucleolytic cleavage to 5'-phosphomonoester.. Its function is as follows. Endonuclease that specifically degrades the RNA of RNA-DNA hybrids. The sequence is that of Ribonuclease HII from Mesorhizobium japonicum (strain LMG 29417 / CECT 9101 / MAFF 303099) (Mesorhizobium loti (strain MAFF 303099)).